Reading from the N-terminus, the 164-residue chain is Respiratory growth induced protein 2 (164 aa).

The protein belongs to the RGI1 family.

It is found in the cytoplasm. Its function is as follows. Involved in the control of energetic metabolism and significantly contribute to cell fitness, especially under respiratory growth conditions. This Saccharomyces cerevisiae (strain RM11-1a) (Baker's yeast) protein is Respiratory growth induced protein 2 (RGI2).